The following is a 228-amino-acid chain: UPF0173 metal-dependent hydrolase lin1612 (228 aa).

The protein belongs to the UPF0173 family.

The sequence is that of UPF0173 metal-dependent hydrolase lin1612 from Listeria innocua serovar 6a (strain ATCC BAA-680 / CLIP 11262).